Reading from the N-terminus, the 667-residue chain is Sorting nexin mvp1 (667 aa).

Positions 221 to 268 (AGNLHSQQPPKFSVDSSVDDNAITPRKPFSKIPNRLSPSTQPLLSNSR) are disordered. The span at 224 to 236 (LHSQQPPKFSVDS) shows a compositional bias: polar residues. The 120-residue stretch at 279–398 (TSFPASLEMN…RVFFTEPNVF (120 aa)) folds into the PX domain. R320, S322, and K346 together coordinate a 1,2-diacyl-sn-glycero-3-phospho-(1D-myo-inositol-3-phosphate). Residues 574–594 (ANSDESGRNRTFLNRSSKKRA) form a disordered region.

This sequence belongs to the sorting nexin family. As to quaternary structure, homodimer. Forms an autoinhibited tetramer consisting of 2 homodimers that self-interact, wherein the membrane-interacting BAR surfaces are sequestered and the PX lipid-binding sites are occluded. Interacts with Vps1.

The protein resides in the cytoplasm. The protein localises to the endosome membrane. Functionally, required for vacuolar protein sorting. Component of the retromer-mediated endosome-to-Golgi retrograde pathway. Required for efficient cargo export from the endosome, promoting Vps1-mediated fission of retromer-coated tubules that bud from the endosome. The polypeptide is Sorting nexin mvp1 (mvp1) (Schizosaccharomyces pombe (strain 972 / ATCC 24843) (Fission yeast)).